The chain runs to 205 residues: MNIPPIYTGSIVPLDISNIDTDAIIPKEFLQKVTKTGFGKHLFNNWRYTDHNNKILNPDFNLNKPCYRESTILLTRDNFGCGSSREHAVWALLDYGIKIIISSSFSDIFYTNSFNNQLLLITLDKTTIDLFFNLIKKNKINEITVDLIENYVFFEKKRYYFYLSNFHRMCILNGLDEIDFTLQHYKKIKKYGNQIPNFFVYNSIS.

Belongs to the LeuD family. LeuD type 1 subfamily. As to quaternary structure, heterodimer of LeuC and LeuD.

The enzyme catalyses (2R,3S)-3-isopropylmalate = (2S)-2-isopropylmalate. Its pathway is amino-acid biosynthesis; L-leucine biosynthesis; L-leucine from 3-methyl-2-oxobutanoate: step 2/4. In terms of biological role, catalyzes the isomerization between 2-isopropylmalate and 3-isopropylmalate, via the formation of 2-isopropylmaleate. The chain is 3-isopropylmalate dehydratase small subunit (leuD) from Buchnera aphidicola subsp. Thelaxes suberi.